Consider the following 248-residue polypeptide: Amphiregulin (248 aa).

The signal sequence occupies residues 1–26; it reads MRTPLLPLARSVLLLLVLGSGHYAAA. A propeptide spanning residues 27–99 is cleaved from the precursor; that stretch reads LELNDPSSGK…IIDDSVRVEQ (73 aa). Disordered stretches follow at residues 29-48, 57-77, and 100-136; these read LNDP…SAGG, VSTI…YDYS, and VIKP…KKKK. Residues 58–70 are compositionally biased toward polar residues; that stretch reads STISEMPSGSELS. Over residues 100–116 the composition is skewed to basic and acidic residues; that stretch reads VIKPKKNKTEGEKSTEK. Residue asparagine 106 is glycosylated (N-linked (GlcNAc...) asparagine). A compositionally biased stretch (basic residues) spans 117–136; sequence PKRKKKGGKNGKGRRNKKKK. In terms of domain architecture, EGF-like spans 135–175; sequence KKNPCTAKFQNFCIHGECRYIENLEVVTCNCHQDYFGERCG. 3 disulfide bridges follow: cysteine 139/cysteine 152, cysteine 147/cysteine 163, and cysteine 165/cysteine 174. A helical membrane pass occupies residues 192–215; sequence IAVVAVTIFVSAIILAAIGIGIVI. An N-linked (GlcNAc...) asparagine glycan is attached at asparagine 241.

Belongs to the amphiregulin family. As to quaternary structure, the immature precursor interacts with CNIH.

The protein resides in the membrane. In terms of biological role, ligand of the EGF receptor/EGFR. Autocrine growth factor as well as a mitogen for a broad range of target cells including astrocytes, Schwann cells and fibroblasts. The polypeptide is Amphiregulin (Areg) (Mus musculus (Mouse)).